A 581-amino-acid chain; its full sequence is Arginine--tRNA ligase (581 aa).

A 'HIGH' region motif is present at residues 131 to 141; it reads ANPTGPLHVGH.

The protein belongs to the class-I aminoacyl-tRNA synthetase family. Monomer.

The protein resides in the cytoplasm. It carries out the reaction tRNA(Arg) + L-arginine + ATP = L-arginyl-tRNA(Arg) + AMP + diphosphate. This chain is Arginine--tRNA ligase, found in Nitrosospira multiformis (strain ATCC 25196 / NCIMB 11849 / C 71).